A 364-amino-acid polypeptide reads, in one-letter code: DNA-(apurinic or apyrimidinic site) endonuclease (364 aa).

Composition is skewed to basic and acidic residues over residues 1 to 12 (MKRFFKPIEKEN) and 23 to 39 (PEKRDGDGDGVEEEKNQ). The tract at residues 1–42 (MKRFFKPIEKENSPAAKKPCLSPEKRDGDGDGVEEEKNQNEP) is disordered. E80 serves as a coordination point for Mg(2+). The active site involves Y182. Mg(2+) contacts are provided by D222, N224, and D342. D222 acts as the Proton donor/acceptor in catalysis.

This sequence belongs to the DNA repair enzymes AP/exoA family. Interacts with ROS1. ROS1 is required for APE1L to stably associate with the DNA substrate. Requires Mg(2+) as cofactor. In terms of tissue distribution, expressed in leaves, flower buds and developing siliques. Not detected in roots.

It localises to the nucleus. It is found in the nucleolus. In terms of biological role, apurinic/apyrimidinic (AP) endonuclease involved in active DNA demethylation and gene imprinting. According to a report, also displays an in vitro 3'-phosphatase activity. According to another report, has no in vitro 3'-phosphatase activity. Catalyzes the conversion of the 3'-blocking groups 3'-phosphor-alpha,beta-unsaturated aldehyde (3'-PUA) generated by ROS1 to 3'-OH. Has a strong non-specific affinity to DNA. Redundant with APE2 and at least one functional allele is required for seed viability. The polypeptide is DNA-(apurinic or apyrimidinic site) endonuclease (Arabidopsis thaliana (Mouse-ear cress)).